A 253-amino-acid polypeptide reads, in one-letter code: Sec-independent protein translocase protein TatC (253 aa).

6 helical membrane passes run V18–F38, A69–L89, V96–Y116, L151–V171, I187–F207, and M208–P228. Positions K231 to S253 are disordered. Over residues N244–S253 the composition is skewed to basic and acidic residues.

The protein belongs to the TatC family. As to quaternary structure, the Tat system comprises two distinct complexes: a TatABC complex, containing multiple copies of TatA, TatB and TatC subunits, and a separate TatA complex, containing only TatA subunits. Substrates initially bind to the TatABC complex, which probably triggers association of the separate TatA complex to form the active translocon.

The protein resides in the cell inner membrane. Part of the twin-arginine translocation (Tat) system that transports large folded proteins containing a characteristic twin-arginine motif in their signal peptide across membranes. Together with TatB, TatC is part of a receptor directly interacting with Tat signal peptides. The sequence is that of Sec-independent protein translocase protein TatC from Helicobacter pylori (strain ATCC 700392 / 26695) (Campylobacter pylori).